Consider the following 183-residue polypeptide: ATP-dependent protease subunit HslV (183 aa).

T13 is an active-site residue. The Na(+) site is built by G168, C171, and T174.

The protein belongs to the peptidase T1B family. HslV subfamily. A double ring-shaped homohexamer of HslV is capped on each side by a ring-shaped HslU homohexamer. The assembly of the HslU/HslV complex is dependent on binding of ATP.

The protein resides in the cytoplasm. It carries out the reaction ATP-dependent cleavage of peptide bonds with broad specificity.. With respect to regulation, allosterically activated by HslU binding. In terms of biological role, protease subunit of a proteasome-like degradation complex believed to be a general protein degrading machinery. The protein is ATP-dependent protease subunit HslV of Xanthomonas oryzae pv. oryzae (strain MAFF 311018).